The following is a 944-amino-acid chain: Bifunctional uridylyltransferase/uridylyl-removing enzyme (944 aa).

The segment at 1–371 (MRDLDFTNIL…RFTHRNRKIA (371 aa)) is uridylyltransferase. A uridylyl-removing region spans residues 372–727 (GSVEFVEDRG…VRTDSFHAIT (356 aa)). Residues 488-604 (VDEHLIRTVD…TDFADRVQSL (117 aa)) form the HD domain. 2 ACT domains span residues 728–809 (EITV…EVIA) and 839–918 (VIEV…LRER). Residues 911–944 (EEDELRERMPSGIIAPAATARTPPASEKKAGSPI) form a disordered region. Positions 925–935 (APAATARTPPA) are enriched in low complexity.

It belongs to the GlnD family. Requires Mg(2+) as cofactor.

It carries out the reaction [protein-PII]-L-tyrosine + UTP = [protein-PII]-uridylyl-L-tyrosine + diphosphate. The catalysed reaction is [protein-PII]-uridylyl-L-tyrosine + H2O = [protein-PII]-L-tyrosine + UMP + H(+). Its activity is regulated as follows. Uridylyltransferase (UTase) activity is inhibited by glutamine, while glutamine likely activates uridylyl-removing (UR) activity. Its function is as follows. Modifies, by uridylylation and deuridylylation, the PII regulatory proteins GlnB and GlnK, in response to the nitrogen status of the cell that GlnD senses through the glutamine level. Under low glutamine levels, catalyzes the conversion of the PII proteins and UTP to PII-UMP and PPi, while under higher glutamine levels, GlnD likely hydrolyzes PII-UMP to PII and UMP (deuridylylation). Thus, controls uridylylation state and activity of the PII proteins, and plays an important role in the regulation of nitrogen metabolism. The protein is Bifunctional uridylyltransferase/uridylyl-removing enzyme of Rhizobium leguminosarum bv. viciae.